Consider the following 189-residue polypeptide: UPF0301 protein CTLon_0458 (189 aa).

It belongs to the UPF0301 (AlgH) family.

The protein is UPF0301 protein CTLon_0458 of Chlamydia trachomatis serovar L2b (strain UCH-1/proctitis).